The primary structure comprises 364 residues: tRNA 2-selenouridine synthase (364 aa).

Residues 14–137 (LLADTPLIDV…LRQTAIQATW (124 aa)) form the Rhodanese domain. The S-selanylcysteine intermediate role is filled by Cys97.

Belongs to the SelU family. Monomer.

It catalyses the reaction 5-methylaminomethyl-2-thiouridine(34) in tRNA + selenophosphate + (2E)-geranyl diphosphate + H2O + H(+) = 5-methylaminomethyl-2-selenouridine(34) in tRNA + (2E)-thiogeraniol + phosphate + diphosphate. It carries out the reaction 5-methylaminomethyl-2-thiouridine(34) in tRNA + (2E)-geranyl diphosphate = 5-methylaminomethyl-S-(2E)-geranyl-thiouridine(34) in tRNA + diphosphate. The enzyme catalyses 5-methylaminomethyl-S-(2E)-geranyl-thiouridine(34) in tRNA + selenophosphate + H(+) = 5-methylaminomethyl-2-(Se-phospho)selenouridine(34) in tRNA + (2E)-thiogeraniol. The catalysed reaction is 5-methylaminomethyl-2-(Se-phospho)selenouridine(34) in tRNA + H2O = 5-methylaminomethyl-2-selenouridine(34) in tRNA + phosphate. Its function is as follows. Involved in the post-transcriptional modification of the uridine at the wobble position (U34) of tRNA(Lys), tRNA(Glu) and tRNA(Gln). Catalyzes the conversion of 2-thiouridine (S2U-RNA) to 2-selenouridine (Se2U-RNA). Acts in a two-step process involving geranylation of 2-thiouridine (S2U) to S-geranyl-2-thiouridine (geS2U) and subsequent selenation of the latter derivative to 2-selenouridine (Se2U) in the tRNA chain. The protein is tRNA 2-selenouridine synthase of Salmonella enteritidis.